Here is a 24-residue protein sequence, read N- to C-terminus: Brevinin-1Pa (24 aa).

A disulfide bridge connects residues cysteine 18 and cysteine 24.

Expressed by the skin glands.

The protein localises to the secreted. Its function is as follows. Antibacterial activity against Gram-positive bacterium S.aureus and Gram-negative bacterium E.coli. Has activity against C.albicans. This chain is Brevinin-1Pa, found in Lithobates pipiens (Northern leopard frog).